A 147-amino-acid polypeptide reads, in one-letter code: Flagellar assembly factor FliW (147 aa).

This sequence belongs to the FliW family. Interacts with translational regulator CsrA and flagellin(s).

It localises to the cytoplasm. Its function is as follows. Acts as an anti-CsrA protein, binds CsrA and prevents it from repressing translation of its target genes, one of which is flagellin. Binds to flagellin and participates in the assembly of the flagellum. The polypeptide is Flagellar assembly factor FliW (Oceanobacillus iheyensis (strain DSM 14371 / CIP 107618 / JCM 11309 / KCTC 3954 / HTE831)).